A 57-amino-acid chain; its full sequence is Large ribosomal subunit protein bL32 (57 aa).

Over residues 1 to 20 the composition is skewed to basic residues; that stretch reads MAVPKRRMSRSNTRSRRAQW. Residues 1–22 form a disordered region; sequence MAVPKRRMSRSNTRSRRAQWKA.

The protein belongs to the bacterial ribosomal protein bL32 family.

This chain is Large ribosomal subunit protein bL32, found in Mycobacterium sp. (strain JLS).